Consider the following 80-residue polypeptide: Large ribosomal subunit protein bL31B (80 aa).

The protein belongs to the bacterial ribosomal protein bL31 family. Type B subfamily. Part of the 50S ribosomal subunit.

This chain is Large ribosomal subunit protein bL31B, found in Xanthomonas campestris pv. campestris (strain 8004).